Consider the following 683-residue polypeptide: Long-chain-fatty-acid--CoA ligase 5 (683 aa).

A helical; Signal-anchor for type III membrane protein transmembrane segment spans residues 12–32 (LPTPALICILTFGAAIFLWLI). Residue Ile32 is modified to Phosphoserine. Over 33 to 683 (TRPQPVLPLL…IDSLYEHIQD (651 aa)) the chain is Cytoplasmic. The residue at position 361 (Lys361) is an N6-acetyllysine.

The protein belongs to the ATP-dependent AMP-binding enzyme family. Requires Mg(2+) as cofactor.

It localises to the mitochondrion. The protein resides in the endoplasmic reticulum. The protein localises to the mitochondrion outer membrane. Its subcellular location is the endoplasmic reticulum membrane. It is found in the cell membrane. It carries out the reaction a long-chain fatty acid + ATP + CoA = a long-chain fatty acyl-CoA + AMP + diphosphate. It catalyses the reaction (5Z,8Z,11Z,14Z)-eicosatetraenoate + ATP + CoA = (5Z,8Z,11Z,14Z)-eicosatetraenoyl-CoA + AMP + diphosphate. The catalysed reaction is hexadecanoate + ATP + CoA = hexadecanoyl-CoA + AMP + diphosphate. The enzyme catalyses (E)-hexadec-2-enoate + ATP + CoA = (2E)-hexadecenoyl-CoA + AMP + diphosphate. It carries out the reaction 15-hydroxy-(5Z,8Z,11Z,13E)-eicosatetraenoate + ATP + CoA = 15-hydroxy-(5Z,8Z,11Z,13E)-eicosatetraenoyl-CoA + AMP + diphosphate. It catalyses the reaction 12-hydroxy-(5Z,8Z,10E,14Z)-eicosatetraenoate + ATP + CoA = 12-hydroxy-(5Z,8Z,10E,14Z)-eicosatetraenoyl-CoA + AMP + diphosphate. The catalysed reaction is 5-hydroxy-(6E,8Z,11Z,14Z)-eicosatetraenoate + ATP + CoA = 5-hydroxy-(6E,8Z,11Z,14Z)-eicosatetraenoyl-CoA + AMP + diphosphate. The enzyme catalyses 14,15-epoxy-(5Z,8Z,11Z)-eicosatrienoate + ATP + CoA = 14,15-epoxy-(5Z,8Z,11Z)-eicosatrienoyl-CoA + AMP + diphosphate. It carries out the reaction 11,12-epoxy-(5Z,8Z,14Z)-eicosatrienoate + ATP + CoA = 11,12-epoxy-(5Z,8Z,14Z)-eicosatrienoyl-CoA + AMP + diphosphate. It catalyses the reaction (9Z)-octadecenoate + ATP + CoA = (9Z)-octadecenoyl-CoA + AMP + diphosphate. Catalyzes the conversion of long-chain fatty acids to their active form acyl-CoAs for both synthesis of cellular lipids, and degradation via beta-oxidation. ACSL5 may activate fatty acids from exogenous sources for the synthesis of triacylglycerol destined for intracellular storage. Utilizes a wide range of saturated fatty acids with a preference for C16-C18 unsaturated fatty acids. It was suggested that it may also stimulate fatty acid oxidation. At the villus tip of the crypt-villus axis of the small intestine may sensitize epithelial cells to apoptosis specifically triggered by the death ligand TRAIL. May have a role in the survival of glioma cells. This is Long-chain-fatty-acid--CoA ligase 5 from Homo sapiens (Human).